The following is a 411-amino-acid chain: MAMVVSVWRDPQEDVAGGPPSGPNPAAQPAREQQQAASAAPHTPQTPSQPGPPSTPGTAGDKGSQNSGQSQQHIECVVCGDKSSGKHYGQFTCEGCKSFFKRSVRRNLTYTCRANRNCPIDQHHRNQCQYCRLKKCLKVGMRREAVQRGRMPPTQPNPGQYALTNGDPLNGHCYLSGYISLLLRAEPYPTSRYGSQCMQPNNIMGIENICELAARLLFSAVEWARNIPFFPDLQITDQVSLLRLTWSELFVLNAAQCSMPLHVAPLLAAAGLHASPMSADRVVAFMDHIRIFQEQVEKLKALHVDSAEYSCIKAIVLFTSDACGLSDAAHIESLQEKSQCALEEYVRSQYPNQPSRFGKLLLRLPSLRTVSSSVIEQLFFVRLVGKTPIETLIRDMLLSGSSFNWPYMSIQ.

Positions 1 to 68 are disordered; sequence MAMVVSVWRD…AGDKGSQNSG (68 aa). Low complexity predominate over residues 24–46; it reads NPAAQPAREQQQAASAAPHTPQT. The segment at residues 73 to 148 is a DNA-binding region (nuclear receptor); that stretch reads HIECVVCGDK…VGMRREAVQR (76 aa). 2 NR C4-type zinc fingers span residues 76-96 and 112-136; these read CVVC…CEGC and CRAN…LKKC. Residues 174-400 form the NR LBD domain; that stretch reads YLSGYISLLL…TLIRDMLLSG (227 aa).

The protein belongs to the nuclear hormone receptor family. NR2 subfamily. In terms of tissue distribution, first expressed in 11-12 hour embryos. In the rostral brain of 13 hour embryos, expressed within the anterior half of the midbrain and the posterior part of the diencephalon. In the presumptive hindbrain, expressed in a segment-like stripe in the anterior region, resembling the presumptive rhombomere units of the hindbrain. Also detected in the intermediate mesoderm, posterior to the first somite. As somitogenesis proceeds, expression extends posteriorly and flanks the 10 most anterior somites. Expression changes extensively both in level and expansion of domains between 13 and 20 hours. In the rostral brain, expression extends to include a major part of the diencephalon and a caudal portion of the telencephalon. Within the hindbrain, strongly expressed in the two most anterior rhombomeres, and a lower but uniform expression is seen to extend throughout rhombomere 7. In 28 hour embryos, higher and more uniform expression is seen in both rostral and hindbrain areas. Also expressed in the retina of the eye.

The protein localises to the nucleus. Its function is as follows. Putative transcription factor that is required in photoreceptor cells precursors during eye development. This chain is Nuclear receptor subfamily 2 group F member 1-A (nr2f1a), found in Danio rerio (Zebrafish).